The primary structure comprises 199 residues: Probable GTP-binding protein EngB (199 aa).

Positions D28–V199 constitute an EngB-type G domain. Residues G36–S43, G63–L67, D81–G84, T148–D151, and F180–S182 contribute to the GTP site. Mg(2+) contacts are provided by S43 and T65.

This sequence belongs to the TRAFAC class TrmE-Era-EngA-EngB-Septin-like GTPase superfamily. EngB GTPase family. It depends on Mg(2+) as a cofactor.

Its function is as follows. Necessary for normal cell division and for the maintenance of normal septation. The chain is Probable GTP-binding protein EngB from Streptococcus pyogenes serotype M1.